We begin with the raw amino-acid sequence, 177 residues long: Inorganic pyrophosphatase (177 aa).

Substrate contacts are provided by lysine 29, arginine 43, and tyrosine 55. Residues aspartate 65, aspartate 70, and aspartate 102 each coordinate Mg(2+). Tyrosine 141 is a binding site for substrate.

Belongs to the PPase family. In terms of assembly, homohexamer. It depends on Mg(2+) as a cofactor.

It localises to the cytoplasm. The enzyme catalyses diphosphate + H2O = 2 phosphate + H(+). Catalyzes the hydrolysis of inorganic pyrophosphate (PPi) forming two phosphate ions. The polypeptide is Inorganic pyrophosphatase (Aquifex pyrophilus).